The chain runs to 474 residues: Glutathione synthetase (474 aa).

An N-acetylalanine modification is found at Ala-2. Arg-125 contacts substrate. Glu-144 is a binding site for ATP. Mg(2+) is bound by residues Glu-144 and Asn-146. Residues 148–151, 214–216, Gln-220, and 267–270 contribute to the substrate site; these read ISAS, ERN, and RDGY. Residues Lys-305, 364 to 373, Tyr-375, and 398 to 401 each bind ATP; these read KPQREGGGNN and MEKT. Glu-368 contacts Mg(2+). Position 415 is a phosphoserine (Ser-415). Glu-425 lines the ATP pocket. Position 450 (Arg-450) interacts with substrate. 2 residues coordinate ATP: Lys-452 and Asp-458. 461 to 462 is a substrate binding site; sequence VA.

It belongs to the eukaryotic GSH synthase family. Homodimer. The cofactor is Mg(2+).

It carries out the reaction gamma-L-glutamyl-L-cysteine + glycine + ATP = glutathione + ADP + phosphate + H(+). The protein operates within sulfur metabolism; glutathione biosynthesis; glutathione from L-cysteine and L-glutamate: step 2/2. Its function is as follows. Catalyzes the production of glutathione from gamma-glutamylcysteine and glycine in an ATP-dependent manner. Glutathione (gamma-glutamylcysteinylglycine, GSH) is the most abundant intracellular thiol in living aerobic cells and is required for numerous processes including the protection of cells against oxidative damage, amino acid transport, the detoxification of foreign compounds, the maintenance of protein sulfhydryl groups in a reduced state and acts as a cofactor for a number of enzymes. This Macaca fascicularis (Crab-eating macaque) protein is Glutathione synthetase (GSS).